Reading from the N-terminus, the 181-residue chain is Ribose 1,5-bisphosphate phosphokinase PhnN (181 aa).

12–19 serves as a coordination point for ATP; the sequence is GPSGAGKD.

This sequence belongs to the ribose 1,5-bisphosphokinase family.

It carries out the reaction alpha-D-ribose 1,5-bisphosphate + ATP = 5-phospho-alpha-D-ribose 1-diphosphate + ADP. The protein operates within metabolic intermediate biosynthesis; 5-phospho-alpha-D-ribose 1-diphosphate biosynthesis; 5-phospho-alpha-D-ribose 1-diphosphate from D-ribose 5-phosphate (route II): step 3/3. Functionally, catalyzes the phosphorylation of ribose 1,5-bisphosphate to 5-phospho-D-ribosyl alpha-1-diphosphate (PRPP). The polypeptide is Ribose 1,5-bisphosphate phosphokinase PhnN (Acidiphilium cryptum (strain JF-5)).